The primary structure comprises 449 residues: Biotin carboxylase (449 aa).

The Biotin carboxylation domain occupies 4–448 (MIEKVLIANR…NIHYLEKMLG (445 aa)). Residues lysine 119, lysine 162, 168–169 (GG), 204–207 (EKYL), histidine 212, and histidine 239 contribute to the ATP site. Residues 123-320 (IAAMKAAGVP…IVKEQILIAA (198 aa)) form the ATP-grasp domain. Lysine 241 is a hydrogencarbonate binding site. The ATP site is built by glutamate 279 and glutamate 291. Residues glutamate 279, glutamate 291, and asparagine 293 each contribute to the Mg(2+) site. Mn(2+) contacts are provided by glutamate 279, glutamate 291, and asparagine 293. The hydrogencarbonate site is built by arginine 295, valine 298, and arginine 341. Arginine 295 is a catalytic residue. Arginine 341 is a biotin binding site.

As to quaternary structure, acetyl-CoA carboxylase is a heterohexamer of biotin carboxyl carrier protein, biotin carboxylase and the two subunits of carboxyl transferase in a 2:2 complex. Requires Mg(2+) as cofactor. Mn(2+) serves as cofactor.

The enzyme catalyses N(6)-biotinyl-L-lysyl-[protein] + hydrogencarbonate + ATP = N(6)-carboxybiotinyl-L-lysyl-[protein] + ADP + phosphate + H(+). Its pathway is lipid metabolism; malonyl-CoA biosynthesis; malonyl-CoA from acetyl-CoA: step 1/1. In terms of biological role, this protein is a component of the acetyl coenzyme A carboxylase complex; first, biotin carboxylase catalyzes the carboxylation of the carrier protein and then the transcarboxylase transfers the carboxyl group to form malonyl-CoA. The chain is Biotin carboxylase (accC) from Allochromatium vinosum (strain ATCC 17899 / DSM 180 / NBRC 103801 / NCIMB 10441 / D) (Chromatium vinosum).